The following is an 87-amino-acid chain: Phosphoribosyl-ATP pyrophosphatase (87 aa).

Belongs to the PRA-PH family.

It localises to the cytoplasm. The catalysed reaction is 1-(5-phospho-beta-D-ribosyl)-ATP + H2O = 1-(5-phospho-beta-D-ribosyl)-5'-AMP + diphosphate + H(+). It functions in the pathway amino-acid biosynthesis; L-histidine biosynthesis; L-histidine from 5-phospho-alpha-D-ribose 1-diphosphate: step 2/9. This Pseudarthrobacter chlorophenolicus (strain ATCC 700700 / DSM 12829 / CIP 107037 / JCM 12360 / KCTC 9906 / NCIMB 13794 / A6) (Arthrobacter chlorophenolicus) protein is Phosphoribosyl-ATP pyrophosphatase.